The sequence spans 305 residues: Ferrochelatase (305 aa).

Fe cation-binding residues include His182 and Glu262.

Belongs to the ferrochelatase family.

The protein resides in the cytoplasm. It catalyses the reaction heme b + 2 H(+) = protoporphyrin IX + Fe(2+). Its pathway is porphyrin-containing compound metabolism; protoheme biosynthesis; protoheme from protoporphyrin-IX: step 1/1. Catalyzes the ferrous insertion into protoporphyrin IX. This chain is Ferrochelatase, found in Herpetosiphon aurantiacus (strain ATCC 23779 / DSM 785 / 114-95).